The primary structure comprises 188 residues: MATYSSNDFRPGLKIMFEGEPYAIESSEFVKPGKGQAFARVKMRRLLTGSRVEKTFKSTDSAEGADVVDTNLNYLYNDGDFYHFMHPETFEQHPVEAKTVGDAAKWLLDNAECIVTLWNGKPIQVLPPNFVELEITDTDPGLKGDTAGTGGKPATLSTGAVVKVPLFVQIGEVIKVDTRSAEYVSRVK.

Position 34 is an N6-(3,6-diaminohexanoyl)-5-hydroxylysine (Lys34).

It belongs to the elongation factor P family. In terms of processing, may be beta-lysylated on the epsilon-amino group of Lys-34 by the combined action of EpmA and EpmB, and then hydroxylated on the C5 position of the same residue by EpmC (if this protein is present). Lysylation is critical for the stimulatory effect of EF-P on peptide-bond formation. The lysylation moiety may extend toward the peptidyltransferase center and stabilize the terminal 3-CCA end of the tRNA. Hydroxylation of the C5 position on Lys-34 may allow additional potential stabilizing hydrogen-bond interactions with the P-tRNA.

It is found in the cytoplasm. It participates in protein biosynthesis; polypeptide chain elongation. Involved in peptide bond synthesis. Alleviates ribosome stalling that occurs when 3 or more consecutive Pro residues or the sequence PPG is present in a protein, possibly by augmenting the peptidyl transferase activity of the ribosome. Modification of Lys-34 is required for alleviation. This Erwinia tasmaniensis (strain DSM 17950 / CFBP 7177 / CIP 109463 / NCPPB 4357 / Et1/99) protein is Elongation factor P.